Consider the following 90-residue polypeptide: Small ribosomal subunit protein bS16 (90 aa).

The protein belongs to the bacterial ribosomal protein bS16 family.

In Heliobacterium modesticaldum (strain ATCC 51547 / Ice1), this protein is Small ribosomal subunit protein bS16.